The primary structure comprises 514 residues: 2-isopropylmalate synthase (514 aa).

One can recognise a Pyruvate carboxyltransferase domain in the interval 5–268; that stretch reads LIIFDTTLRD…DVGIDTTQIV (264 aa). Mn(2+) contacts are provided by Asp-14, His-202, His-204, and Asn-239. Residues 395-514 are regulatory domain; the sequence is KFVSLSQHSE…KDDKLNPQRS (120 aa).

The protein belongs to the alpha-IPM synthase/homocitrate synthase family. LeuA type 1 subfamily. As to quaternary structure, homodimer. Mn(2+) serves as cofactor.

The protein resides in the cytoplasm. It catalyses the reaction 3-methyl-2-oxobutanoate + acetyl-CoA + H2O = (2S)-2-isopropylmalate + CoA + H(+). It functions in the pathway amino-acid biosynthesis; L-leucine biosynthesis; L-leucine from 3-methyl-2-oxobutanoate: step 1/4. In terms of biological role, catalyzes the condensation of the acetyl group of acetyl-CoA with 3-methyl-2-oxobutanoate (2-ketoisovalerate) to form 3-carboxy-3-hydroxy-4-methylpentanoate (2-isopropylmalate). The chain is 2-isopropylmalate synthase from Burkholderia multivorans (strain ATCC 17616 / 249).